Consider the following 609-residue polypeptide: Spore-specific protein YSW1 (609 aa).

The tract at residues 1–24 (MSSLADTVEGSEAKRGRFSNNALT) is disordered. 2 positions are modified to phosphoserine: serine 159 and serine 160. Positions 162 to 225 (DENESHFTDA…DDEFSPATPP (64 aa)) are disordered. A compositionally biased stretch (polar residues) spans 169–179 (TDANSHVMQSK). Basic and acidic residues predominate over residues 200–209 (LKKEYEKSFE). Residues 210 to 219 (EYSDDSDDEF) show a composition bias toward acidic residues.

This chain is Spore-specific protein YSW1 (YSW1), found in Saccharomyces cerevisiae (strain ATCC 204508 / S288c) (Baker's yeast).